A 209-amino-acid polypeptide reads, in one-letter code: Uracil phosphoribosyltransferase (209 aa).

Residues Arg-79, Arg-104, and 131–139 contribute to the 5-phospho-alpha-D-ribose 1-diphosphate site; that span reads DPMLATGGS. Residues Ile-194 and 199–201 each bind uracil; that span reads GDA. Asp-200 provides a ligand contact to 5-phospho-alpha-D-ribose 1-diphosphate.

The protein belongs to the UPRTase family. Mg(2+) serves as cofactor.

The enzyme catalyses UMP + diphosphate = 5-phospho-alpha-D-ribose 1-diphosphate + uracil. The protein operates within pyrimidine metabolism; UMP biosynthesis via salvage pathway; UMP from uracil: step 1/1. With respect to regulation, allosterically activated by GTP. Its function is as follows. Catalyzes the conversion of uracil and 5-phospho-alpha-D-ribose 1-diphosphate (PRPP) to UMP and diphosphate. The sequence is that of Uracil phosphoribosyltransferase from Streptococcus thermophilus (strain CNRZ 1066).